A 279-amino-acid chain; its full sequence is Eukaryotic translation initiation factor 3 subunit G (279 aa).

3 disordered regions span residues 1–26, 66–115, and 152–171; these read MSTG…IANP, RKNW…KAHE, and TPSG…AAGA. A Phosphoserine modification is found at S78. Positions 102–115 are enriched in basic and acidic residues; the sequence is KQDEKKEEEDKAHE. Low complexity predominate over residues 152–163; the sequence is TPSGTTPEPTSE. The region spanning 197 to 276 is the RRM domain; it reads TTLKVSQLNS…LILHLEWSKK (80 aa).

The protein belongs to the eIF-3 subunit G family. Component of the eukaryotic translation initiation factor 3 (eIF-3) complex.

The protein resides in the cytoplasm. Functionally, RNA-binding component of the eukaryotic translation initiation factor 3 (eIF-3) complex, which is involved in protein synthesis of a specialized repertoire of mRNAs and, together with other initiation factors, stimulates binding of mRNA and methionyl-tRNAi to the 40S ribosome. The eIF-3 complex specifically targets and initiates translation of a subset of mRNAs involved in cell proliferation. This subunit can bind 18S rRNA. The polypeptide is Eukaryotic translation initiation factor 3 subunit G (Candida albicans (strain SC5314 / ATCC MYA-2876) (Yeast)).